The chain runs to 954 residues: DNA repair and telomere maintenance protein NBS1 (954 aa).

Residues 22 to 85 enclose the FHA domain; sequence YLFGRTVAEA…KGTLVNGVQI (64 aa). BRCT domains are found at residues 107–186 and 244–349; these read TLKI…NAIV and GYTF…LEAI. Polar residues predominate over residues 368-377; that stretch reads VSVSASVEPQ. Disordered regions lie at residues 368–431, 444–506, 528–580, 630–654, and 692–954; these read VSVS…FKGF, QAQS…PLPE, IEAG…KQED, VRQP…WDPR, and GIGD…GRRR. Residues 378–393 are compositionally biased toward basic and acidic residues; that stretch reads SSEKVRPAVEDRKEVE. The span at 416–428 shows a compositional bias: basic residues; sequence PHRRERRTGRSRF. A compositionally biased stretch (polar residues) spans 458–471; it reads PSASQDSLFVSQRE. The segment covering 541-554 has biased composition (acidic residues); that stretch reads PEPEREDEDVEMVE. Basic and acidic residues-rich tracts occupy residues 640 to 654 and 704 to 715; these read RTRE…WDPR and GRVPRRPKETQT. The segment covering 726–737 has biased composition (low complexity); sequence DGSGFAAAAASG. Positions 738–751 are enriched in basic and acidic residues; sequence KGKEKDKENEKEVG. Low complexity-rich tracts occupy residues 801–815 and 826–842; these read EVVS…ASEP and RANA…SQTQ. The span at 936–945 shows a compositional bias: acidic residues; it reads GSEEESEDDE.

Belongs to the Nibrin family. In terms of assembly, component of the MRN complex composed of two heterodimers RAD50 and MRE11 associated with a single NBS1.

It is found in the nucleus. Its subcellular location is the chromosome. Component of the MRN complex, which plays a central role in double-strand break (DSB) repair, DNA recombination, maintenance of telomere integrity and meiosis. The MRN complex is involved in the repair of DNA double-strand breaks (DSBs) via homologous recombination (HR), an error-free mechanism which primarily occurs during S and G2 phases. The complex (1) mediates the end resection of damaged DNA, which generates proper single-stranded DNA, a key initial steps in HR, and is (2) required for the recruitment of other repair factors and efficient activation of ATM and ATR upon DNA damage. The MRN complex possesses single-strand endonuclease activity and double-strand-specific 3'-5' exonuclease activity, which are provided by MRE11, to initiate end resection, which is required for single-strand invasion and recombination. Within the MRN complex, NBS1 acts as a protein-protein adapter, which specifically recognizes and binds phosphorylated proteins, promoting their recruitment to DNA damage sites. Recruits MRE11 and RAD50 components of the MRN complex to DSBs in response to DNA damage. The sequence is that of DNA repair and telomere maintenance protein NBS1 from Chaetomium thermophilum (strain DSM 1495 / CBS 144.50 / IMI 039719) (Thermochaetoides thermophila).